The sequence spans 209 residues: Glycerol-3-phosphate acyltransferase (209 aa).

The next 5 helical transmembrane spans lie at 4-24 (IAIG…AILI), 53-75 (LAAA…IGYG), 80-102 (PFWL…FFHF), 112-132 (LGAI…TWLL), and 138-158 (GYSS…VWWF).

Belongs to the PlsY family. As to quaternary structure, probably interacts with PlsX.

Its subcellular location is the cell inner membrane. The enzyme catalyses an acyl phosphate + sn-glycerol 3-phosphate = a 1-acyl-sn-glycero-3-phosphate + phosphate. Its pathway is lipid metabolism; phospholipid metabolism. Its function is as follows. Catalyzes the transfer of an acyl group from acyl-phosphate (acyl-PO(4)) to glycerol-3-phosphate (G3P) to form lysophosphatidic acid (LPA). This enzyme utilizes acyl-phosphate as fatty acyl donor, but not acyl-CoA or acyl-ACP. In Sodalis glossinidius (strain morsitans), this protein is Glycerol-3-phosphate acyltransferase.